Consider the following 495-residue polypeptide: ATP synthase subunit beta, chloroplastic (495 aa).

Residue 172–179 (GGAGVGKT) coordinates ATP.

It belongs to the ATPase alpha/beta chains family. F-type ATPases have 2 components, CF(1) - the catalytic core - and CF(0) - the membrane proton channel. CF(1) has five subunits: alpha(3), beta(3), gamma(1), delta(1), epsilon(1). CF(0) has four main subunits: a(1), b(1), b'(1) and c(9-12).

The protein localises to the plastid. Its subcellular location is the chloroplast thylakoid membrane. It carries out the reaction ATP + H2O + 4 H(+)(in) = ADP + phosphate + 5 H(+)(out). Produces ATP from ADP in the presence of a proton gradient across the membrane. The catalytic sites are hosted primarily by the beta subunits. This chain is ATP synthase subunit beta, chloroplastic, found in Hyacinthoides non-scripta (English bluebell).